Consider the following 1358-residue polypeptide: DNA-directed RNA polymerase subunit beta (1358 aa).

This sequence belongs to the RNA polymerase beta chain family. As to quaternary structure, the RNAP catalytic core consists of 2 alpha, 1 beta, 1 beta' and 1 omega subunit. When a sigma factor is associated with the core the holoenzyme is formed, which can initiate transcription.

The enzyme catalyses RNA(n) + a ribonucleoside 5'-triphosphate = RNA(n+1) + diphosphate. DNA-dependent RNA polymerase catalyzes the transcription of DNA into RNA using the four ribonucleoside triphosphates as substrates. This chain is DNA-directed RNA polymerase subunit beta, found in Francisella tularensis subsp. holarctica (strain LVS).